Here is a 443-residue protein sequence, read N- to C-terminus: Ribosomal protein uS12 methylthiotransferase RimO (443 aa).

The MTTase N-terminal domain maps to P10 to P120. [4Fe-4S] cluster is bound by residues C19, C55, C84, C152, C156, and C159. In terms of domain architecture, Radical SAM core spans L138–R375. In terms of domain architecture, TRAM spans A378 to L443.

The protein belongs to the methylthiotransferase family. RimO subfamily. [4Fe-4S] cluster is required as a cofactor.

It localises to the cytoplasm. The catalysed reaction is L-aspartate(89)-[ribosomal protein uS12]-hydrogen + (sulfur carrier)-SH + AH2 + 2 S-adenosyl-L-methionine = 3-methylsulfanyl-L-aspartate(89)-[ribosomal protein uS12]-hydrogen + (sulfur carrier)-H + 5'-deoxyadenosine + L-methionine + A + S-adenosyl-L-homocysteine + 2 H(+). Catalyzes the methylthiolation of an aspartic acid residue of ribosomal protein uS12. The chain is Ribosomal protein uS12 methylthiotransferase RimO from Alkalilimnicola ehrlichii (strain ATCC BAA-1101 / DSM 17681 / MLHE-1).